The chain runs to 443 residues: Protein UIP5 (443 aa).

The signal sequence occupies residues 1 to 27 (MSRDVRAEKLAISLLILSLFLIFQLVA). Over 28-398 (EIYLNNGDQY…LFKVVLTIWH (371 aa)) the chain is Perinuclear space. Residues 399–420 (YSEILLLIMGIYLFSACIRVFQ) traverse the membrane as a helical segment. Residues 421 to 443 (RRFKKIRSRRKRAGSHSVGLLPM) lie on the Cytoplasmic side of the membrane.

The protein resides in the nucleus membrane. The chain is Protein UIP5 (UIP5) from Saccharomyces cerevisiae (strain ATCC 204508 / S288c) (Baker's yeast).